We begin with the raw amino-acid sequence, 212 residues long: Pyrrolidone-carboxylate peptidase (212 aa).

Residues E80, C143, and H165 contribute to the active site.

Belongs to the peptidase C15 family. Homotetramer.

The protein resides in the cytoplasm. The catalysed reaction is Release of an N-terminal pyroglutamyl group from a polypeptide, the second amino acid generally not being Pro.. Its function is as follows. Removes 5-oxoproline from various penultimate amino acid residues except L-proline. This chain is Pyrrolidone-carboxylate peptidase, found in Vibrio vulnificus (strain CMCP6).